Here is a 1008-residue protein sequence, read N- to C-terminus: SKI family transcriptional corepressor 2 (1008 aa).

Disordered regions lie at residues 280-315 (HLLG…DDDD) and 514-927 (EPGG…KKDV). Pro residues-rich tracts occupy residues 284-294 (APPPPPPPPPL) and 525-534 (APPPGQPPPV). 2 stretches are compositionally biased toward low complexity: residues 535-544 (VANGPGSGPP) and 578-595 (GVTS…SVGT). Residues 626-635 (GGKDDAESLA) are compositionally biased toward basic and acidic residues. Residues 649–666 (PAHHHHHHHHPHHHHHHP) show a composition bias toward basic residues. Residues 691-703 (APPPPPPPPPLAP) show a composition bias toward pro residues. 2 stretches are compositionally biased toward acidic residues: residues 724-739 (DSSE…QEVD) and 748-766 (GEEE…EDEE). A compositionally biased stretch (basic and acidic residues) spans 787–797 (LSEKGSGRDRT). The span at 842–855 (SSSGGSRPGSPVHH) shows a compositional bias: low complexity. Composition is skewed to basic and acidic residues over residues 856–872 (PSLE…KPKE), 880–890 (TKDDNFSDKNK), and 905–915 (FWRERSGEHTQ).

It belongs to the SKI family. As to quaternary structure, interacts with SMAD2 and SMAD3. Expression is restricted to adult and embryonic central nervous system. Expressed at high levels in the developing cerebellum, ventral metencephalon and myelencephalon at 12.5 dpc (at protein level). In the adult cerebellum, expressed specifically in Purkinje cells.

The protein resides in the nucleus. It localises to the cytoplasm. In terms of biological role, acts as a TGF-beta antagonist in the nervous system. Exhibits transcriptional repressor activity. The polypeptide is SKI family transcriptional corepressor 2 (Mus musculus (Mouse)).